A 208-amino-acid polypeptide reads, in one-letter code: NADH-quinone oxidoreductase subunit I 2 (208 aa).

4Fe-4S ferredoxin-type domains lie at 79–109 (ILVE…IEGK) and 119–148 (SVFN…QTDI). [4Fe-4S] cluster contacts are provided by Cys-88, Cys-91, Cys-94, Cys-98, Cys-128, Cys-131, Cys-134, and Cys-138.

This sequence belongs to the complex I 23 kDa subunit family. In terms of assembly, NDH-1 is composed of 14 different subunits. Subunits NuoA, H, J, K, L, M, N constitute the membrane sector of the complex. [4Fe-4S] cluster is required as a cofactor.

The protein resides in the cell inner membrane. It catalyses the reaction a quinone + NADH + 5 H(+)(in) = a quinol + NAD(+) + 4 H(+)(out). Functionally, NDH-1 shuttles electrons from NADH, via FMN and iron-sulfur (Fe-S) centers, to quinones in the respiratory chain. The immediate electron acceptor for the enzyme in this species is believed to be ubiquinone. Couples the redox reaction to proton translocation (for every two electrons transferred, four hydrogen ions are translocated across the cytoplasmic membrane), and thus conserves the redox energy in a proton gradient. The polypeptide is NADH-quinone oxidoreductase subunit I 2 (Aquifex aeolicus (strain VF5)).